Here is a 156-residue protein sequence, read N- to C-terminus: Arginine repressor (156 aa).

This sequence belongs to the ArgR family.

It is found in the cytoplasm. The protein operates within amino-acid biosynthesis; L-arginine biosynthesis [regulation]. In terms of biological role, regulates arginine biosynthesis genes. The protein is Arginine repressor of Erwinia tasmaniensis (strain DSM 17950 / CFBP 7177 / CIP 109463 / NCPPB 4357 / Et1/99).